The chain runs to 804 residues: Endoplasmin (804 aa).

Positions M1 to A21 are cleaved as a signal peptide. The short motif at S42–T44 is the SRT pseudosubstrate motif element. N62 carries an N-linked (GlcNAc...) asparagine glycan. Phosphoserine is present on S64. Residue N107 is glycosylated (N-linked (GlcNAc...) asparagine). Positions 107, 149, and 162 each coordinate ATP. K168 is modified (N6-(2-hydroxyisobutyryl)lysine). S172 is modified (phosphoserine). F199 is a binding site for ATP. An N-linked (GlcNAc...) asparagine glycan is attached at N217. A disordered region spans residues T288–T323. Residues V289–E317 are compositionally biased toward acidic residues. 2 positions are modified to phosphoserine: S306 and S403. Position 404 is an N6-succinyllysine (K404). An N-linked (GlcNAc...) asparagine glycan is attached at N445. The residue at position 447 (S447) is a Phosphoserine. K479 is modified (N6-acetyllysine). 2 N-linked (GlcNAc...) asparagine glycosylation sites follow: N481 and N502. N6-succinyllysine is present on K633. The disordered stretch occupies residues D750–L804. Acidic residues predominate over residues E757–Q791. T786 carries the post-translational modification Phosphothreonine. Residues E792 to L804 are compositionally biased toward basic and acidic residues. Residues K801 to L804 carry the Prevents secretion from ER motif.

This sequence belongs to the heat shock protein 90 family. As to quaternary structure, homodimer; disulfide-linked. Component of an EIF2 complex at least composed of CELF1/CUGBP1, CALR, CALR3, EIF2S1, EIF2S2, HSP90B1 and HSPA5. Part of a large chaperone multiprotein complex comprising DNAJB11, HSP90B1, HSPA5, HYOU, PDIA2, PDIA4, PDIA6, PPIB, SDF2L1, UGGT1 and very small amounts of ERP29, but not, or at very low levels, CALR nor CANX. Interacts with AIMP1; regulates its retention in the endoplasmic reticulum. Hyperglycosylated form interacts with OS9; promoting its degradation by the endoplasmic reticulum associated degradation (ERAD). Interacts with CNPY3. This interaction is disrupted in the presence of ATP. Interacts with TLR4 and TLR9, but not with TLR3. Interacts with MZB1 in a calcium-dependent manner. Interacts with METTL23. Interacts with IL1B; the interaction facilitates cargo translocation into the ERGIC. Interacts with EIF2AK3. Post-translationally, phosphorylated by CK2. N-glycosylated cotranslationally at Asn-217 by STT3A-containing OST-A complex: this glycosylation is constitutive. In response to various stress, 5 additional facultative sites (Asn-62, Asn-107, Asn-445, Asn-481 and Asn-502) can be glycosylated post-translationally by STT3B-containing OST-B complex, leading to a hyperglycosylated form that is degraded by the ER-associated degradation (ERAD) pathway. In normal conditions, the OST-A complex together with CCDC134 prevent glycosylation at facultative sites during protein folding, thereby preventing hyperglycosylation. Mechanistically, nascent HSP90B1 is tethered during translation to a specialized CCDC134-containing translocon that forms a microenvironment for its folding, in which STT3A associates with the SRT pseudosubstrate motif, and prevents access to facultative glycosylation sites until folding is completed, rendering its facultative sites inaccessible to the OST-B complex.

It is found in the endoplasmic reticulum lumen. It localises to the sarcoplasmic reticulum lumen. The protein resides in the melanosome. It catalyses the reaction ATP + H2O = ADP + phosphate + H(+). In terms of biological role, ATP-dependent chaperone involved in the processing of proteins in the endoplasmic reticulum, regulating their transport. Together with MESD, acts as a modulator of the Wnt pathway by promoting the folding of LRP6, a coreceptor of the canonical Wnt pathway. When associated with CNPY3, required for proper folding of Toll-like receptors. Promotes folding and trafficking of TLR4 to the cell surface. May participate in the unfolding of cytosolic leaderless cargos (lacking the secretion signal sequence) such as the interleukin 1/IL-1 to facilitate their translocation into the ERGIC (endoplasmic reticulum-Golgi intermediate compartment) and secretion; the translocation process is mediated by the cargo receptor TMED10. The sequence is that of Endoplasmin (HSP90B1) from Pongo abelii (Sumatran orangutan).